Reading from the N-terminus, the 210-residue chain is Large ribosomal subunit protein uL3 (210 aa).

A disordered region spans residues 133 to 152 (ATHGNSLSHRVHGSTGQNQT). Gln151 carries the N5-methylglutamine modification.

It belongs to the universal ribosomal protein uL3 family. In terms of assembly, part of the 50S ribosomal subunit. Forms a cluster with proteins L14 and L19. In terms of processing, methylated by PrmB.

Functionally, one of the primary rRNA binding proteins, it binds directly near the 3'-end of the 23S rRNA, where it nucleates assembly of the 50S subunit. This Francisella philomiragia subsp. philomiragia (strain ATCC 25017 / CCUG 19701 / FSC 153 / O#319-036) protein is Large ribosomal subunit protein uL3.